Reading from the N-terminus, the 141-residue chain is Nucleoside diphosphate kinase (141 aa).

Residues Lys-11, Phe-59, Arg-87, Thr-93, Arg-104, and Asn-114 each coordinate ATP. Residue His-117 is the Pros-phosphohistidine intermediate of the active site.

Belongs to the NDK family. Homotetramer. Requires Mg(2+) as cofactor.

It localises to the cytoplasm. It catalyses the reaction a 2'-deoxyribonucleoside 5'-diphosphate + ATP = a 2'-deoxyribonucleoside 5'-triphosphate + ADP. The enzyme catalyses a ribonucleoside 5'-diphosphate + ATP = a ribonucleoside 5'-triphosphate + ADP. In terms of biological role, major role in the synthesis of nucleoside triphosphates other than ATP. The ATP gamma phosphate is transferred to the NDP beta phosphate via a ping-pong mechanism, using a phosphorylated active-site intermediate. This Neisseria meningitidis serogroup A / serotype 4A (strain DSM 15465 / Z2491) protein is Nucleoside diphosphate kinase.